The primary structure comprises 328 residues: PLASTID TRANSCRIPTIONALLY ACTIVE protein 6, chloroplastic (328 aa).

Residues 1–14 are compositionally biased toward low complexity; sequence MASSAASPSLSLLS. The disordered stretch occupies residues 1-21; it reads MASSAASPSLSLLSFTSKPPY. The N-terminal 59 residues, 1–59, are a transit peptide targeting the chloroplast; it reads MASSAASPSLSLLSFTSKPPYPSGSQRLFASFRTDGLFAPLTLKSRRGRGIVVKVDDVD. A Nuclear localization signal motif is present at residues 267–275; sequence RKRDRKDDL. An RNA binding domain motif is present at residues 301–319; sequence EREEWTKTREDMEKHLRKL.

Subunit of the plastid-encoded RNA polymerase (PEP) complex. Component of a large nuclear subcomplex that may include other PEP subunits (e.g. PTAC12/HMR/PAP5, PTAC14/PAP7 and PTAC7/PAP12). Binds directly to PTAC12/HMR/PAP5 in the nucleus. Interacts with MTERF5. In terms of tissue distribution, mostly expressed in rosette leaves, stems and flowers, and, to a lower extent, in roots and cauline leaves.

Its subcellular location is the plastid. The protein localises to the chloroplast. The protein resides in the chloroplast thylakoid. It is found in the nucleus. It localises to the nucleoplasm. Essential protein involved in plastid gene expression and in chloroplast biogenesis. Links photomorphogenesis and chloroplast biogenesis through its dual localization; required for the formation of late photobodies in the nucleus, as well as for phytochrome B-mediated signaling cascade and subsequent reshaping of the plastid-encoded RNA polymerase (PEP) activity. Binds RNA via specific recognition motifs of viral origin. Recruited by MTERF5 to the transcriptionally paused region of psbEFLJ. Promotes leaf greening. In Arabidopsis thaliana (Mouse-ear cress), this protein is PLASTID TRANSCRIPTIONALLY ACTIVE protein 6, chloroplastic.